A 449-amino-acid polypeptide reads, in one-letter code: Cortexillin-2 (449 aa).

The actin-binding stretch occupies residues 1–231; sequence MTDLHKEWEK…ILYTSLFFHA (231 aa). Calponin-homology (CH) domains are found at residues 10-119 and 128-233; these read KVQE…RKYR and KSSE…HAYR. Coiled coils occupy residues 232-364 and 408-441; these read YRAK…AEGL and QFEEQAKRLGSKVENENISLEKYLSLKEEELKSA.

The protein belongs to the cortexillin family. As to quaternary structure, homodimer; parallel.

It is found in the cytoplasm. It localises to the cytoskeleton. Actin-bundling protein. When linked to F-actin the actin filaments form preferentially anti-parallel bundles that associate into meshworks. Plays a major role in cytokinesis. This chain is Cortexillin-2 (ctxB), found in Heterostelium pallidum (strain ATCC 26659 / Pp 5 / PN500) (Cellular slime mold).